The primary structure comprises 424 residues: Glutamate-1-semialdehyde 2,1-aminomutase (424 aa).

Position 265 is an N6-(pyridoxal phosphate)lysine (Lys265).

This sequence belongs to the class-III pyridoxal-phosphate-dependent aminotransferase family. HemL subfamily. Homodimer. It depends on pyridoxal 5'-phosphate as a cofactor.

The protein localises to the cytoplasm. The catalysed reaction is (S)-4-amino-5-oxopentanoate = 5-aminolevulinate. Its pathway is porphyrin-containing compound metabolism; protoporphyrin-IX biosynthesis; 5-aminolevulinate from L-glutamyl-tRNA(Glu): step 2/2. This is Glutamate-1-semialdehyde 2,1-aminomutase from Alkaliphilus oremlandii (strain OhILAs) (Clostridium oremlandii (strain OhILAs)).